The following is a 1252-amino-acid chain: Nephrin (1252 aa).

A signal peptide spans 1-35 (MGAKRVTVRGARTSPIHRMSSLTPLLLMGMLTSGL). Residues 36–1078 (AESPVPTSAP…PGPPRLPLLP (1043 aa)) are Extracellular-facing. 6 Ig-like C2-type domains span residues 39–144 (PVPT…VILS), 149–247 (PKVL…ASFT), 256–347 (PPVI…RSIT), 354–448 (PSAI…KSLT), 454–554 (PAQK…TQLV), and 558–649 (PPTN…ETVS). N-linked (GlcNAc...) asparagine glycosylation occurs at Asn54. 3 disulfides stabilise this stretch: Cys67–Cys125, Cys174–Cys231, and Cys279–Cys331. Asn370 carries an N-linked (GlcNAc...) asparagine glycan. A disulfide bridge connects residues Cys375 and Cys431. Phosphoserine is present on Ser446. Cys479 and Cys542 form a disulfide bridge. N-linked (GlcNAc...) asparagine glycosylation is found at Asn561, Asn578, Asn591, and Asn722. Cys581 and Cys637 are joined by a disulfide. Ig-like C2-type domains lie at 754–846 (PTIR…LVRL) and 852–953 (PQVD…VSIS). Intrachain disulfides connect Cys775-Cys830 and Cys877-Cys934. One can recognise a Fibronectin type-III domain in the interval 957-1052 (PPLGLKVVSI…IQVSVTTPGP (96 aa)). The segment at 1043-1067 (IQVSVTTPGPDQAPEDTDHQLPTEL) is disordered. Residues 1079 to 1099 (VLFAVGGLLLLSNASCVGGLL) traverse the membrane as a helical segment. Residues 1100–1252 (WRRRLRRLAE…LPFELRGHLV (153 aa)) lie on the Cytoplasmic side of the membrane. Ser1112 bears the Phosphoserine mark. Over residues 1113–1127 (EKTEAGSEDRIRNEY) the composition is skewed to basic and acidic residues. Residues 1113–1144 (EKTEAGSEDRIRNEYEESQWTGDRDTRSSTVS) are disordered. Thr1115 is modified (phosphothreonine). Ser1119 carries the phosphoserine modification. Residue Tyr1204 is modified to Phosphotyrosine; by FYN.

It belongs to the immunoglobulin superfamily. In terms of assembly, interacts with NPHS2 and with CD2AP (via C-terminal domain). Self-associates (via the Ig-like domains). Also interacts (via the Ig-like domains) with KIRREL1/NEPH1 and KIRREL2; the interaction with KIRREL1 is dependent on KIRREL1 glycosylation. Interacts with KIRREL3. Interacts with MAGI1 (via PDZ 2 and 3 domains) forming a tripartite complex with IGSF5/JAM4. Interacts with DDN; the interaction is direct. Forms a complex with ACTN4, CASK, IQGAP1, MAGI2, SPTAN1 and SPTBN1. Interacts with phosphatidylinositol 3-kinase regulatory subunit PIK3R1; the interaction is reduced by high glucose levels. In terms of processing, phosphorylated at Tyr-1204 by FYN, leading to the recruitment and activation of phospholipase C-gamma-1/PLCG1. Tyrosine phosphorylation is reduced by high glucose levels. Dephosphorylated by tensin TNS2 which leads to reduced binding of NPHN1 to PIK3R1. As to expression, strongly expressed in the podocytes of kidney glomeruli (at protein level) and at lower levels in the spleen.

Its subcellular location is the cell membrane. In terms of biological role, seems to play a role in the development or function of the kidney glomerular filtration barrier. Regulates glomerular vascular permeability. May anchor the podocyte slit diaphragm to the actin cytoskeleton. Plays a role in skeletal muscle formation through regulation of myoblast fusion. The protein is Nephrin (Nphs1) of Rattus norvegicus (Rat).